The primary structure comprises 107 residues: Flagellar transcriptional regulator FlhD (107 aa).

This sequence belongs to the FlhD family. Homodimer; disulfide-linked. Forms a heterohexamer composed of two FlhC and four FlhD subunits. Each FlhC binds a FlhD dimer, forming a heterotrimer, and a hexamer assembles by dimerization of two heterotrimers.

Its subcellular location is the cytoplasm. Its function is as follows. Functions in complex with FlhC as a master transcriptional regulator that regulates transcription of several flagellar and non-flagellar operons by binding to their promoter region. Activates expression of class 2 flagellar genes, including fliA, which is a flagellum-specific sigma factor that turns on the class 3 genes. Also regulates genes whose products function in a variety of physiological pathways. This chain is Flagellar transcriptional regulator FlhD, found in Bordetella bronchiseptica (strain ATCC BAA-588 / NCTC 13252 / RB50) (Alcaligenes bronchisepticus).